Reading from the N-terminus, the 254-residue chain is Type III pantothenate kinase 2 (254 aa).

An ATP-binding site is contributed by 6-13 (DMGNSHIH). Residue 107 to 110 (GADR) participates in substrate binding. The Proton acceptor role is filled by D109. D130 provides a ligand contact to K(+). T133 lines the ATP pocket. Residue T185 coordinates substrate.

It belongs to the type III pantothenate kinase family. In terms of assembly, homodimer. NH4(+) serves as cofactor. K(+) is required as a cofactor.

Its subcellular location is the cytoplasm. It carries out the reaction (R)-pantothenate + ATP = (R)-4'-phosphopantothenate + ADP + H(+). Its pathway is cofactor biosynthesis; coenzyme A biosynthesis; CoA from (R)-pantothenate: step 1/5. Catalyzes the phosphorylation of pantothenate (Pan), the first step in CoA biosynthesis. The chain is Type III pantothenate kinase 2 from Francisella tularensis subsp. holarctica (strain LVS).